The chain runs to 397 residues: Elongation factor Tu (397 aa).

In terms of domain architecture, tr-type G spans 10-206 (KPHVNIGTIG…AVDEYIPTPE (197 aa)). The interval 19–26 (GHIDHGKT) is G1. 19–26 (GHIDHGKT) is a GTP binding site. Thr26 serves as a coordination point for Mg(2+). The G2 stretch occupies residues 62–66 (GITIS). The segment at 83 to 86 (DCPG) is G3. GTP is bound by residues 83-87 (DCPGH) and 138-141 (NKCD). The segment at 138 to 141 (NKCD) is G4. The tract at residues 176 to 178 (AAF) is G5.

It belongs to the TRAFAC class translation factor GTPase superfamily. Classic translation factor GTPase family. EF-Tu/EF-1A subfamily. Monomer.

The protein resides in the cytoplasm. It catalyses the reaction GTP + H2O = GDP + phosphate + H(+). In terms of biological role, GTP hydrolase that promotes the GTP-dependent binding of aminoacyl-tRNA to the A-site of ribosomes during protein biosynthesis. This is Elongation factor Tu from Nocardioides sp. (strain ATCC BAA-499 / JS614).